The chain runs to 35 residues: Conotoxin Cal6.1c (35 aa).

A propeptide spanning residues 1–35 (GLNRPSKRCLAGSAPCEFHKRSTCCSGHCIIWWCA) is cleaved from the precursor. 3 disulfide bridges follow: C9–C25, C16–C29, and C24–C34.

It belongs to the conotoxin O1 superfamily. As to expression, expressed by the venom duct.

It is found in the secreted. Probable neurotoxin with unknown target. Possibly targets ion channels. The protein is Conotoxin Cal6.1c of Californiconus californicus (California cone).